The chain runs to 187 residues: UPF0301 protein Pcryo_0062 (187 aa).

It belongs to the UPF0301 (AlgH) family.

This is UPF0301 protein Pcryo_0062 from Psychrobacter cryohalolentis (strain ATCC BAA-1226 / DSM 17306 / VKM B-2378 / K5).